The primary structure comprises 125 residues: Thioredoxin H-type (125 aa).

Residues 2-112 (AEGNVFACHS…LERKVAALAA (111 aa)) form the Thioredoxin domain. Catalysis depends on nucleophile residues C38 and C41. An intrachain disulfide couples C38 to C41.

It belongs to the thioredoxin family. Plant H-type subfamily.

The protein localises to the cytoplasm. Its function is as follows. Participates in various redox reactions through the reversible oxidation of the active center dithiol to a disulfide. The H form is known to activate a number of cytosolic enzymes. The polypeptide is Thioredoxin H-type (SB09) (Picea mariana (Black spruce)).